We begin with the raw amino-acid sequence, 177 residues long: Peptide methionine sulfoxide reductase MsrA 2 (177 aa).

Residue C12 is part of the active site.

The protein belongs to the MsrA Met sulfoxide reductase family.

The enzyme catalyses L-methionyl-[protein] + [thioredoxin]-disulfide + H2O = L-methionyl-(S)-S-oxide-[protein] + [thioredoxin]-dithiol. The catalysed reaction is [thioredoxin]-disulfide + L-methionine + H2O = L-methionine (S)-S-oxide + [thioredoxin]-dithiol. In terms of biological role, has an important function as a repair enzyme for proteins that have been inactivated by oxidation. Catalyzes the reversible oxidation-reduction of methionine sulfoxide in proteins to methionine. The polypeptide is Peptide methionine sulfoxide reductase MsrA 2 (msrA2) (Staphylococcus aureus (strain Mu50 / ATCC 700699)).